The sequence spans 506 residues: Histone acetyltransferase esa-1 (506 aa).

The disordered stretch occupies residues M1–D24. Positions I26 to D78 constitute a Tudor-knot domain. The interval D82–N215 is disordered. Basic and acidic residues predominate over residues N87–T98. Positions Q109 to S120 are enriched in basic residues. A compositionally biased stretch (basic and acidic residues) spans G167–E178. An MYST-type HAT domain is found at S220–P494. Residues I253 to L278 form a C2HC MYST-type zinc finger. An ESA1-RPD3 motif motif is present at residues R303–Y324. Residue K320 is modified to N6-acetyllysine; by autocatalysis. Residues A361–T365 and Q370–R376 contribute to the acetyl-CoA site. The Proton donor/acceptor role is filled by E396. S400 lines the acetyl-CoA pocket.

The protein belongs to the MYST (SAS/MOZ) family. As to quaternary structure, component of the NuA4 histone acetyltransferase complex. In terms of processing, autoacetylation at Lys-320 is required for proper function.

It localises to the nucleus. The protein resides in the chromosome. The enzyme catalyses L-lysyl-[histone] + acetyl-CoA = N(6)-acetyl-L-lysyl-[histone] + CoA + H(+). It carries out the reaction L-lysyl-[protein] + acetyl-CoA = N(6)-acetyl-L-lysyl-[protein] + CoA + H(+). The catalysed reaction is 2-hydroxyisobutanoyl-CoA + L-lysyl-[protein] = N(6)-(2-hydroxyisobutanoyl)-L-lysyl-[protein] + CoA + H(+). It catalyses the reaction (2E)-butenoyl-CoA + L-lysyl-[protein] = N(6)-(2E)-butenoyl-L-lysyl-[protein] + CoA + H(+). Functionally, catalytic component of the NuA4 histone acetyltransferase (HAT) complex which is involved in epigenetic transcriptional activation of selected genes principally by acetylation of nucleosomal histones H4, H3, H2B, H2A and H2A variant H2A.Z. Acetylates histone H4 to form H4K5ac, H4K8ac, H4K12ac and H4K16ac, histone H3 to form H3K14ac, and histone H2A to form H2AK4ac and H2AK7ac. The NuA4 complex is involved in the DNA damage response and is required for chromosome segregation. The NuA4 complex plays a direct role in repair of DNA double-strand breaks (DSBs) through homologous recombination. Recruitment to promoters depends on H3K4me. Also acetylates non-histone proteins. In addition to protein acetyltransferase, can use different acyl-CoA substrates, such as 2-hydroxyisobutanoyl-CoA (2-hydroxyisobutyryl-CoA) or (2E)-butenoyl-CoA (crotonyl-CoA), and is able to mediate protein 2-hydroxyisobutyrylation and crotonylation, respectively. The protein is Histone acetyltransferase esa-1 (esa-1) of Neurospora crassa (strain ATCC 24698 / 74-OR23-1A / CBS 708.71 / DSM 1257 / FGSC 987).